The following is a 609-amino-acid chain: Mitogen-activated protein kinase kinase kinase 3 (609 aa).

The interval 1–202 is disordered; sequence MPTWWGRKSC…SAVHGSRIGG (202 aa). The segment covering 11 to 28 has biased composition (basic and acidic residues); it reads KNKDDNHRGIISTDRDIK. Composition is skewed to low complexity over residues 40 to 64 and 90 to 108; these read PTRG…GFDS and VSGS…SSGS. In terms of domain architecture, Protein kinase spans 214 to 470; the sequence is WKKGKFLGSG…ASQLLEHPFL (257 aa). ATP is bound by residues 220–228 and K243; that span reads LGSGTFGQV. D339 (proton acceptor) is an active-site residue. 2 disordered regions span residues 487–511 and 590–609; these read PRSY…SHDN and MEPS…SRLV. The segment covering 594–609 has biased composition (polar residues); that stretch reads SFRTQTPNSPLRSRLV.

This sequence belongs to the protein kinase superfamily. STE Ser/Thr protein kinase family. MAP kinase kinase kinase subfamily. In terms of assembly, interacts with PBL27. As to expression, expressed in flower buds, roots, leaves, seedlings, stems and immature siliques. Absent of mature pollen.

The enzyme catalyses L-seryl-[protein] + ATP = O-phospho-L-seryl-[protein] + ADP + H(+). It carries out the reaction L-threonyl-[protein] + ATP = O-phospho-L-threonyl-[protein] + ADP + H(+). The chain is Mitogen-activated protein kinase kinase kinase 3 from Arabidopsis thaliana (Mouse-ear cress).